The sequence spans 948 residues: Translation initiation factor IF-2 (948 aa).

Disordered regions lie at residues 61–120 (IQAN…PALI), 162–243 (KSRE…TQSA), and 255–285 (QEKD…SHKI). Basic and acidic residues predominate over residues 68–78 (KNPEQDNKDDL). Low complexity predominate over residues 173 to 189 (SNTNNANSTNNANNVNN). Basic and acidic residues predominate over residues 190–207 (AKKEISEVKKQEQEIKRH). The span at 208–219 (ENIKRRTGFRVI) shows a compositional bias: basic residues. Residues 230 to 243 (ENSVAESKKPTQSA) show a composition bias toward polar residues. One can recognise a tr-type G domain in the interval 447–616 (ERPPVVTIMG…LIQADIMELK (170 aa)). Residues 456–463 (GHVDHGKT) form a G1 region. 456–463 (GHVDHGKT) provides a ligand contact to GTP. The G2 stretch occupies residues 481–485 (GITQH). The interval 502-505 (DTPG) is G3. Residues 502–506 (DTPGH) and 556–559 (NKMD) contribute to the GTP site. The segment at 556–559 (NKMD) is G4. Residues 592 to 594 (SAK) form a G5 region.

The protein belongs to the TRAFAC class translation factor GTPase superfamily. Classic translation factor GTPase family. IF-2 subfamily.

The protein resides in the cytoplasm. Its function is as follows. One of the essential components for the initiation of protein synthesis. Protects formylmethionyl-tRNA from spontaneous hydrolysis and promotes its binding to the 30S ribosomal subunits. Also involved in the hydrolysis of GTP during the formation of the 70S ribosomal complex. This Helicobacter pylori (strain Shi470) protein is Translation initiation factor IF-2.